Here is a 510-residue protein sequence, read N- to C-terminus: Peptide transporter imqJ (510 aa).

A run of 3 helical transmembrane segments spans residues Met1 to Ala21, Ile31 to Pro51, and Gly57 to Ile77. The N-linked (GlcNAc...) asparagine glycan is linked to Asn80. The next 4 helical transmembrane spans lie at Ile116–Ile136, Phe143–Val163, Ile231–Ser251, and Ile269–Leu289. The 121-residue stretch at Pro348 to Ala468 folds into the Fe2OG dioxygenase domain. 2 residues coordinate Fe cation: His377 and Asp379. Asn421 is a glycosylation site (N-linked (GlcNAc...) asparagine). His439 contributes to the Fe cation binding site. Residue Arg459 coordinates 2-oxoglutarate.

The protein belongs to the major facilitator superfamily. Proton-dependent oligopeptide transporter (POT/PTR) (TC 2.A.17) family.

Its subcellular location is the membrane. Functionally, peptide transporter; part of the gene cluster that mediates the biosynthesis of imizoquins A to D, tripeptide-derived alkaloids that serve a protective role against oxidative stress that are essential for normal germination. In Aspergillus flavus (strain ATCC 200026 / FGSC A1120 / IAM 13836 / NRRL 3357 / JCM 12722 / SRRC 167), this protein is Peptide transporter imqJ.